Reading from the N-terminus, the 294-residue chain is 4-diphosphocytidyl-2-C-methyl-D-erythritol kinase (294 aa).

Residue K16 is part of the active site. Residue 99-109 (PMGAGLGGGSS) participates in ATP binding. D141 is a catalytic residue.

This sequence belongs to the GHMP kinase family. IspE subfamily.

The enzyme catalyses 4-CDP-2-C-methyl-D-erythritol + ATP = 4-CDP-2-C-methyl-D-erythritol 2-phosphate + ADP + H(+). It participates in isoprenoid biosynthesis; isopentenyl diphosphate biosynthesis via DXP pathway; isopentenyl diphosphate from 1-deoxy-D-xylulose 5-phosphate: step 3/6. Functionally, catalyzes the phosphorylation of the position 2 hydroxy group of 4-diphosphocytidyl-2C-methyl-D-erythritol. The protein is 4-diphosphocytidyl-2-C-methyl-D-erythritol kinase of Polynucleobacter asymbioticus (strain DSM 18221 / CIP 109841 / QLW-P1DMWA-1) (Polynucleobacter necessarius subsp. asymbioticus).